Consider the following 677-residue polypeptide: WD repeat-containing protein 48 (677 aa).

The residue at position 28 (Tyr-28) is a Phosphotyrosine. WD repeat units lie at residues 28 to 67 (YNRN…QDPY), 73 to 112 (HHTD…CMST), 115 to 154 (THKD…ALTA), 166 to 205 (GNKD…KLMK), 208 to 247 (GHTD…CIAT), 250 to 289 (VHDE…IRVL), 292 to 334 (EEKA…NFRA), and 358 to 397 (KGGA…KVED). Lys-214 is subject to N6-acetyllysine. Lys-578 is modified (N6-acetyllysine). The tract at residues 607–628 (LDNESQTTSSSNNEKPGEQEKE) is disordered. Positions 609–620 (NESQTTSSSNNE) are enriched in low complexity. A Phosphothreonine modification is found at Thr-613.

The protein belongs to the WD repeat WDR48 family. As to quaternary structure, interacts with USP46. Interacts with USP1. Interacts with USP12. Component of the USP12-WDR20-WDR48 deubiquitinating complex. Component of the USP12-DMWD-WDR48 deubiquitinating complex. Interacts with PHLPP1. Interacts with RAD51AP1; the interaction is direct and promotes formation of a trimeric complex with RAD51 via RAD51AP1. Interacts with ATAD5; the interaction regulates USP1-mediated PCNA deubiquitination. Interacts with RAD51; the interaction is enhanced under replication stress. Interacts with ITCH; the interaction is more efficient when both USP12 and WDR48/UAF1 are involved and may facilitate recruitment of the USP12 deubiquitinating complex to Notch. In terms of assembly, (Microbial infection) Interacts with papillomavirus HPV11 E1 protein. (Microbial infection) Interacts with Saimiriine herpesvirus TIP protein. As to quaternary structure, (Microbial infection) Interacts with human cytomegalovirus protein UL138. In terms of assembly, (Microbial infection) Interacts with Epstein-Barr virus protein EBNA3. As to expression, ubiquitous.

It is found in the nucleus. It localises to the cytoplasm. Its subcellular location is the lysosome. The protein resides in the late endosome. Functionally, regulator of deubiquitinating complexes, which acts as a strong activator of USP1, USP12 and USP46. Enhances the USP1-mediated deubiquitination of FANCD2; USP1 being almost inactive by itself. Activates deubiquitination by increasing the catalytic turnover without increasing the affinity of deubiquitinating enzymes for the substrate. Also activates deubiquitinating activity of complexes containing USP12. In complex with USP12, acts as a potential tumor suppressor by positively regulating PHLPP1 stability. Docks at the distal end of the USP12 fingers domain and induces a cascade of structural changes leading to the activation of the enzyme. Together with RAD51AP1, promotes DNA repair by stimulating RAD51-mediated homologous recombination. Binds single-stranded DNA (ssDNA) and double-stranded DNA (dsDNA). DNA-binding is required both for USP1-mediated deubiquitination of FANCD2 and stimulation of RAD51-mediated homologous recombination: both WDR48/UAF1 and RAD51AP1 have coordinated role in DNA-binding during these processes. Together with ATAD5 and by regulating USP1 activity, has a role in PCNA-mediated translesion synthesis (TLS) by deubiquitinating monoubiquitinated PCNA. Together with ATAD5, has a role in recruiting RAD51 to stalled forks during replication stress. In terms of biological role, (Microbial infection) In case of infection by Herpesvirus saimiri, may play a role in vesicular transport or membrane fusion events necessary for transport to lysosomes. Induces lysosomal vesicle formation via interaction with Herpesvirus saimiri tyrosine kinase-interacting protein (TIP). Subsequently, TIP recruits tyrosine-protein kinase LCK, resulting in down-regulation of T-cell antigen receptor TCR. May play a role in generation of enlarged endosomal vesicles via interaction with TIP. In case of infection by papillomavirus HPV11, promotes the maintenance of the viral genome via its interaction with HPV11 helicase E1. This Homo sapiens (Human) protein is WD repeat-containing protein 48.